The primary structure comprises 172 residues: Ribosome maturation factor RimM (172 aa).

Residues 94-167 (ENEFYLFQLK…FIKVELLPGM (74 aa)) enclose the PRC barrel domain.

Belongs to the RimM family. Binds ribosomal protein uS19.

The protein localises to the cytoplasm. Its function is as follows. An accessory protein needed during the final step in the assembly of 30S ribosomal subunit, possibly for assembly of the head region. Essential for efficient processing of 16S rRNA. May be needed both before and after RbfA during the maturation of 16S rRNA. It has affinity for free ribosomal 30S subunits but not for 70S ribosomes. This Carboxydothermus hydrogenoformans (strain ATCC BAA-161 / DSM 6008 / Z-2901) protein is Ribosome maturation factor RimM.